The chain runs to 316 residues: MDTIKIFNHGEFDTIRNELVNLLKVVKWNTINSNVTVSSTDTIDISDCIREILYKQFKNVRNIEVSSDISFIKYNRFNDTTLTDDNVGYYLVIYLNRTKSVKTLIYPTPETVITSSEDIMFSKSLNFRFENVKRDYKLVMCSISLTYKPSICRIQYDNNKYLDISDSQECNNLCYCVITMDPHHLIDLETICVLVDKSGKCLLVNEFYIRFRKNHIYNSFADLCMDHIFELPNTKELFTLRNDDGRNIAWDNDKLESGNNTWIPKTDDEYKFLSKLMNIAKFNNTKFDYYVLVGDTDPCTVFTFKVTKYYINLNYE.

It belongs to the poxviridae OPG031 protein family.

It localises to the host cytoplasm. It is found in the host nucleus. Its function is as follows. Plays a role in the inhibition of host NF-kappa-B activation. Mechanistically, blocks the subunit p65/RELA translocation into the host nucleus. The polypeptide is Protein C4 (OPG031) (Vaccinia virus (strain Western Reserve) (VACV)).